We begin with the raw amino-acid sequence, 82 residues long: UPF0180 protein BH2667 (82 aa).

It belongs to the UPF0180 family.

The sequence is that of UPF0180 protein BH2667 from Halalkalibacterium halodurans (strain ATCC BAA-125 / DSM 18197 / FERM 7344 / JCM 9153 / C-125) (Bacillus halodurans).